Here is a 364-residue protein sequence, read N- to C-terminus: Aminomethyltransferase (364 aa).

It belongs to the GcvT family. As to quaternary structure, the glycine cleavage system is composed of four proteins: P, T, L and H.

The enzyme catalyses N(6)-[(R)-S(8)-aminomethyldihydrolipoyl]-L-lysyl-[protein] + (6S)-5,6,7,8-tetrahydrofolate = N(6)-[(R)-dihydrolipoyl]-L-lysyl-[protein] + (6R)-5,10-methylene-5,6,7,8-tetrahydrofolate + NH4(+). Its function is as follows. The glycine cleavage system catalyzes the degradation of glycine. This is Aminomethyltransferase from Shewanella denitrificans (strain OS217 / ATCC BAA-1090 / DSM 15013).